The sequence spans 274 residues: Undecaprenyl-diphosphatase (274 aa).

Transmembrane regions (helical) follow at residues 4–24 (LLVI…LLPI), 46–66 (VVFE…EYRV), 86–106 (INVA…SDFI), 109–129 (VLFS…IIMW), 145–165 (ISYA…IPGT), 188–208 (FSFF…LWEA), 214–234 (IEDM…TFAV), and 250–270 (FAWY…TGVI).

The protein belongs to the UppP family.

The protein resides in the cell inner membrane. The enzyme catalyses di-trans,octa-cis-undecaprenyl diphosphate + H2O = di-trans,octa-cis-undecaprenyl phosphate + phosphate + H(+). In terms of biological role, catalyzes the dephosphorylation of undecaprenyl diphosphate (UPP). Confers resistance to bacitracin. In Cellvibrio japonicus (strain Ueda107) (Pseudomonas fluorescens subsp. cellulosa), this protein is Undecaprenyl-diphosphatase.